The following is a 385-amino-acid chain: Mannitol-1-phosphate 5-dehydrogenase (385 aa).

Position 3 to 14 (alanine 3 to glycine 14) interacts with NAD(+).

This sequence belongs to the mannitol dehydrogenase family.

The catalysed reaction is D-mannitol 1-phosphate + NAD(+) = beta-D-fructose 6-phosphate + NADH + H(+). This Buchnera aphidicola subsp. Acyrthosiphon pisum (strain 5A) protein is Mannitol-1-phosphate 5-dehydrogenase.